The sequence spans 293 residues: Glutamyl-Q tRNA(Asp) synthetase (293 aa).

Residues 9–13 (RFAPS) and glutamate 45 contribute to the L-glutamate site. The short motif at 12 to 22 (PSPSGELHFGS) is the 'HIGH' region element. Zn(2+) is bound by residues cysteine 101, cysteine 103, tyrosine 115, and cysteine 119. Residues tyrosine 172 and arginine 190 each contribute to the L-glutamate site. A 'KMSKS' region motif is present at residues 228–232 (KLSKQ). ATP is bound at residue lysine 231.

This sequence belongs to the class-I aminoacyl-tRNA synthetase family. GluQ subfamily. The cofactor is Zn(2+).

Catalyzes the tRNA-independent activation of glutamate in presence of ATP and the subsequent transfer of glutamate onto a tRNA(Asp). Glutamate is transferred on the 2-amino-5-(4,5-dihydroxy-2-cyclopenten-1-yl) moiety of the queuosine in the wobble position of the QUC anticodon. The polypeptide is Glutamyl-Q tRNA(Asp) synthetase (Klebsiella pneumoniae (strain 342)).